We begin with the raw amino-acid sequence, 1058 residues long: Carbamoyl phosphate synthase large chain (1058 aa).

The tract at residues 1-401 (MPKRTDIQKI…SLLKACRSLE (401 aa)) is carboxyphosphate synthetic domain. 12 residues coordinate ATP: arginine 129, arginine 169, glycine 175, glycine 176, arginine 208, isoleucine 210, glutamate 215, glycine 241, isoleucine 242, histidine 243, glutamine 284, and glutamate 298. Residues 133–327 (KQLMEELEQP…IAKLAAKIAV (195 aa)) form the ATP-grasp 1 domain. 3 residues coordinate Mg(2+): glutamine 284, glutamate 298, and asparagine 300. Residues glutamine 284, glutamate 298, and asparagine 300 each coordinate Mn(2+). The oligomerization domain stretch occupies residues 402–546 (IGVHHNEIPE…YSTYGWENES (145 aa)). Residues 547 to 929 (IRSDKESVLV…ALYKAFEASY (383 aa)) form a carbamoyl phosphate synthetic domain region. An ATP-grasp 2 domain is found at 671–861 (EQALKELDIP…MAQVATKLIL (191 aa)). ATP-binding residues include arginine 707, serine 746, isoleucine 748, glutamate 752, glycine 777, valine 778, histidine 779, serine 780, glutamine 820, and glutamate 832. The Mg(2+) site is built by glutamine 820, glutamate 832, and asparagine 834. Mn(2+)-binding residues include glutamine 820, glutamate 832, and asparagine 834. One can recognise an MGS-like domain in the interval 930–1058 (LHLPTFGNVV…ESRSFVTEAI (129 aa)). The interval 930 to 1058 (LHLPTFGNVV…ESRSFVTEAI (129 aa)) is allosteric domain.

Belongs to the CarB family. In terms of assembly, composed of two chains; the small (or glutamine) chain promotes the hydrolysis of glutamine to ammonia, which is used by the large (or ammonia) chain to synthesize carbamoyl phosphate. Tetramer of heterodimers (alpha,beta)4. Requires Mg(2+) as cofactor. Mn(2+) is required as a cofactor.

It catalyses the reaction hydrogencarbonate + L-glutamine + 2 ATP + H2O = carbamoyl phosphate + L-glutamate + 2 ADP + phosphate + 2 H(+). The catalysed reaction is hydrogencarbonate + NH4(+) + 2 ATP = carbamoyl phosphate + 2 ADP + phosphate + 2 H(+). It participates in amino-acid biosynthesis; L-arginine biosynthesis; carbamoyl phosphate from bicarbonate: step 1/1. Its pathway is pyrimidine metabolism; UMP biosynthesis via de novo pathway; (S)-dihydroorotate from bicarbonate: step 1/3. Functionally, large subunit of the glutamine-dependent carbamoyl phosphate synthetase (CPSase). CPSase catalyzes the formation of carbamoyl phosphate from the ammonia moiety of glutamine, carbonate, and phosphate donated by ATP, constituting the first step of 2 biosynthetic pathways, one leading to arginine and/or urea and the other to pyrimidine nucleotides. The large subunit (synthetase) binds the substrates ammonia (free or transferred from glutamine from the small subunit), hydrogencarbonate and ATP and carries out an ATP-coupled ligase reaction, activating hydrogencarbonate by forming carboxy phosphate which reacts with ammonia to form carbamoyl phosphate. The sequence is that of Carbamoyl phosphate synthase large chain from Streptococcus pneumoniae (strain ATCC BAA-255 / R6).